A 173-amino-acid polypeptide reads, in one-letter code: Bifunctional protein PyrR (173 aa).

Positions 93 to 105 (VILVDDVLYTGRT) match the PRPP-binding motif.

The protein belongs to the purine/pyrimidine phosphoribosyltransferase family. PyrR subfamily. Homodimer and homohexamer; in equilibrium.

The catalysed reaction is UMP + diphosphate = 5-phospho-alpha-D-ribose 1-diphosphate + uracil. Regulates transcriptional attenuation of the pyrimidine nucleotide (pyr) operon by binding in a uridine-dependent manner to specific sites on pyr mRNA. This disrupts an antiterminator hairpin in the RNA and favors formation of a downstream transcription terminator, leading to a reduced expression of downstream genes. Its function is as follows. Also displays a weak uracil phosphoribosyltransferase activity which is not physiologically significant. The chain is Bifunctional protein PyrR from Streptococcus thermophilus (strain CNRZ 1066).